Here is a 336-residue protein sequence, read N- to C-terminus: Probable deoxyhypusine synthase (336 aa).

Lys308 functions as the Nucleophile in the catalytic mechanism.

Belongs to the deoxyhypusine synthase family. NAD(+) is required as a cofactor.

It carries out the reaction [eIF5A protein]-L-lysine + spermidine = [eIF5A protein]-deoxyhypusine + propane-1,3-diamine. The protein operates within protein modification; eIF5A hypusination. Functionally, catalyzes the NAD-dependent oxidative cleavage of spermidine and the subsequent transfer of the butylamine moiety of spermidine to the epsilon-amino group of a specific lysine residue of the eIF-5A precursor protein to form the intermediate deoxyhypusine residue. The polypeptide is Probable deoxyhypusine synthase (Thermococcus gammatolerans (strain DSM 15229 / JCM 11827 / EJ3)).